Consider the following 359-residue polypeptide: Mitochondrial glutathione transporter SLC25A39 (359 aa).

Topologically, residues 1–14 (MADQDPGGISPLQQ) are mitochondrial intermembrane. Solcar repeat units lie at residues 9–151 (ISPL…LKAF), 159–243 (SDLY…VKSW), and 253–347 (TSVG…GKNF). A helical transmembrane segment spans residues 15-35 (MVASGAGAVVTSLFMTPLDVV). The Mitochondrial matrix portion of the chain corresponds to 36–121 (KVRLQSQRPS…VKIVRHEGTR (86 aa)). Positions 74, 78, 88, and 94 each coordinate [2Fe-2S] cluster. Residues 122-142 (TLWSGLPATLVMTVPATAAYF) traverse the membrane as a helical segment. Residues 143-164 (TAYDQLKAFLCGRALTSDLYAP) are Mitochondrial intermembrane-facing. The chain crosses the membrane as a helical span at residues 165–185 (MVAGALARLGTVTVISPLELV). At 186–214 (RTKLQAQHLSYRELGTCVRAAVAQGGWRS) the chain is on the mitochondrial matrix side. Residues 215-235 (LWLGWGPTALRDVPFSALYWF) traverse the membrane as a helical segment. Residues 236–255 (NYELVKSWLSGLRPKDQTSV) lie on the Mitochondrial intermembrane side of the membrane. Residues 256–276 (GISFVAGGISGMVAATLTLPF) form a helical membrane-spanning segment. Residues 277 to 317 (DVVKTQRQVALGAVEALRVMPLNTDSTWLLLRRILAESGTR) lie on the Mitochondrial matrix side of the membrane. Residues 318 to 338 (GLFAGFLPRIIKAAPSCAIMI) form a helical membrane-spanning segment. The Mitochondrial intermembrane segment spans residues 339–359 (STYEFGKNFFQRLNREQLLSP).

This sequence belongs to the mitochondrial carrier (TC 2.A.29) family. Cleaved and degraded by AFG3L2; degradation by AFG3L2 is regulated by the ability of SLC25A39 to bind iron-sulfur. In absence of mitochondrial glutathione, SLC25A39 binds iron-sulfur, preventing cleavage and degradation by AFG3L2. The presence of mitochondrial glutathione prevents iron-sulfur-binding to SLC25A39, promoting cleavage and degradation by AFG3L2.

The protein resides in the mitochondrion inner membrane. The enzyme catalyses glutathione(in) = glutathione(out). With respect to regulation, the activity of SLC25A39 is regulated by levels of mitochondrial glutathione via its ability to bind [2Fe-2S] iron-sulfur cluster. Upon physiological levels of mitochondrial glutathione, glutathione prevents iron-sulfur-binding to SLC25A39 promoting cleavage and degradation by AFG3L2. Upon depletion of mitochondrial glutathione, SLC25A39 binds iron-sulfur, preventing cleavage and degradation by AFG3L2. Mitochondrial transporter required for glutathione import into mitochondria. Glutathione, which plays key roles in oxidative metabolism, is produced exclusively in the cytosol and is imported in many organelles. Mitochondrial glutathione is required for the activity and stability of proteins containing iron-sulfur clusters, as well as erythropoiesis. In Bos taurus (Bovine), this protein is Mitochondrial glutathione transporter SLC25A39 (SLC25A39).